Reading from the N-terminus, the 185-residue chain is Large ribosomal subunit protein uL5 (185 aa).

This sequence belongs to the universal ribosomal protein uL5 family. As to quaternary structure, part of the 50S ribosomal subunit; part of the 5S rRNA/L5/L18/L25 subcomplex. Contacts the 5S rRNA and the P site tRNA. Forms a bridge to the 30S subunit in the 70S ribosome.

Functionally, this is one of the proteins that bind and probably mediate the attachment of the 5S RNA into the large ribosomal subunit, where it forms part of the central protuberance. In the 70S ribosome it contacts protein S13 of the 30S subunit (bridge B1b), connecting the 2 subunits; this bridge is implicated in subunit movement. Contacts the P site tRNA; the 5S rRNA and some of its associated proteins might help stabilize positioning of ribosome-bound tRNAs. The sequence is that of Large ribosomal subunit protein uL5 from Bacteroides fragilis (strain ATCC 25285 / DSM 2151 / CCUG 4856 / JCM 11019 / LMG 10263 / NCTC 9343 / Onslow / VPI 2553 / EN-2).